Here is a 296-residue protein sequence, read N- to C-terminus: Ribosomal RNA small subunit methyltransferase H (296 aa).

Residues 41–43, D59, F86, D104, and Q111 contribute to the S-adenosyl-L-methionine site; that span reads GGY.

It belongs to the methyltransferase superfamily. RsmH family.

The protein localises to the cytoplasm. It catalyses the reaction cytidine(1402) in 16S rRNA + S-adenosyl-L-methionine = N(4)-methylcytidine(1402) in 16S rRNA + S-adenosyl-L-homocysteine + H(+). Its function is as follows. Specifically methylates the N4 position of cytidine in position 1402 (C1402) of 16S rRNA. This Neorickettsia sennetsu (strain ATCC VR-367 / Miyayama) (Ehrlichia sennetsu) protein is Ribosomal RNA small subunit methyltransferase H.